Reading from the N-terminus, the 49-residue chain is Multidrug efflux pump accessory protein AcrZ (49 aa).

Over M1–S7 the chain is Periplasmic. The helical transmembrane segment at L8 to G28 threads the bilayer. The Cytoplasmic segment spans residues L29–H49.

The protein belongs to the AcrZ family. Part of the AcrA-AcrB-AcrZ-TolC efflux pump, interacts directly with AcrB.

Its subcellular location is the cell inner membrane. Its function is as follows. AcrA-AcrB-AcrZ-TolC is a drug efflux protein complex with a broad substrate specificity. This protein binds to AcrB and is required for efflux of some but not all substrates, suggesting it may influence the specificity of drug export. The chain is Multidrug efflux pump accessory protein AcrZ from Escherichia coli O157:H7.